Reading from the N-terminus, the 319-residue chain is GPI-specific phospholipase A2-like PGAP3 (319 aa).

A signal peptide spans 1–23 (MAGRTARLVLLAGAAALASGSQG). Topologically, residues 24-101 (DREPVYRDCV…GKWPFSRFLC (78 aa)) are lumenal. N40 carries an N-linked (GlcNAc...) asparagine glycan. The helical transmembrane segment at 102-122 (FQEPASAVASFLNGLASLVML) threads the bilayer. The Cytoplasmic segment spans residues 123–135 (CRYRTSVPASSPM). A helical transmembrane segment spans residues 136 to 156 (YPTCVAFAWVSLNAWFWSTVF). Over 157–169 (HTRDTDLTEKMDY) the chain is Lumenal. A helical transmembrane segment spans residues 170-190 (FCASTVILHSIYLCCVRTVGL). Over 191–200 (QHPAMASAFR) the chain is Cytoplasmic. Residues 201–221 (ALLLLLLTAHVSYLSLIHFDY) traverse the membrane as a helical segment. Residues 222–224 (GYN) are Lumenal-facing. Residues 225 to 245 (MAANVAIGLLNAAWWLAWCLW) form a helical membrane-spanning segment. Residues 246–257 (NQRLPHVHKCVA) lie on the Cytoplasmic side of the membrane. The chain crosses the membrane as a helical span at residues 258-278 (VVLLLQGLSLLELLDFPPLFW). Residues 279–281 (VLD) lie on the Lumenal side of the membrane. The chain crosses the membrane as a helical span at residues 282 to 302 (AHAIWHISTIPVHVLFFSFLE). Residues 303-319 (DDSLYLLKESEAKVKLD) lie on the Cytoplasmic side of the membrane.

Belongs to the PGAP3 family.

Its subcellular location is the golgi apparatus membrane. Functionally, involved in the fatty acid remodeling steps of GPI-anchor maturation where the unsaturated acyl chain at sn-2 of inositol phosphate is replaced by a saturated stearoyl chain. May catalyze the first step of the fatty acid remodeling, by removing the unsaturated acyl chain at sn-2 of inositol phosphate, generating a lyso-GPI intermediate. The fatty acid remodeling steps is critical for the integration of GPI-APs into lipid rafts. In Bos taurus (Bovine), this protein is GPI-specific phospholipase A2-like PGAP3.